Consider the following 64-residue polypeptide: Large ribosomal subunit protein bL35 (64 aa).

The segment covering 1–15 (MPKSKTHSGTAKRFK) has biased composition (basic residues). A disordered region spans residues 1-23 (MPKSKTHSGTAKRFKVSGSGKIL).

The protein belongs to the bacterial ribosomal protein bL35 family.

In Rhodococcus jostii (strain RHA1), this protein is Large ribosomal subunit protein bL35.